The primary structure comprises 241 residues: ATP synthase subunit a (241 aa).

The next 5 membrane-spanning stretches (helical) occupy residues 30-50 (GQVFLSSWILIGILLAFVLVG), 89-109 (LPFIGTLFLFIFVSNWGGALI), 128-148 (INTTVAMALLVSLAYFYAGLS), 193-213 (LAVGVLVYLVPLIVPLPVMLL), and 214-234 (GLFTSAIQALIFATLAAFYIG).

The protein belongs to the ATPase A chain family. F-type ATPases have 2 components, CF(1) - the catalytic core - and CF(0) - the membrane proton channel. CF(1) has five subunits: alpha(3), beta(3), gamma(1), delta(1), epsilon(1). CF(0) has four main subunits: a, b, b' and c.

Its subcellular location is the cellular thylakoid membrane. In terms of biological role, key component of the proton channel; it plays a direct role in the translocation of protons across the membrane. The sequence is that of ATP synthase subunit a from Synechococcus sp. (strain CC9902).